We begin with the raw amino-acid sequence, 252 residues long: 3-dehydroquinate dehydratase (252 aa).

Residues 46–48 (EWR) and Arg82 each bind 3-dehydroquinate. His143 functions as the Proton donor/acceptor in the catalytic mechanism. Lys170 serves as the catalytic Schiff-base intermediate with substrate. 3-dehydroquinate contacts are provided by Arg212, Ser231, and Gln235.

The protein belongs to the type-I 3-dehydroquinase family. As to quaternary structure, homodimer.

The enzyme catalyses 3-dehydroquinate = 3-dehydroshikimate + H2O. The protein operates within metabolic intermediate biosynthesis; chorismate biosynthesis; chorismate from D-erythrose 4-phosphate and phosphoenolpyruvate: step 3/7. Involved in the third step of the chorismate pathway, which leads to the biosynthesis of aromatic amino acids. Catalyzes the cis-dehydration of 3-dehydroquinate (DHQ) and introduces the first double bond of the aromatic ring to yield 3-dehydroshikimate. In Listeria monocytogenes serotype 4a (strain HCC23), this protein is 3-dehydroquinate dehydratase.